Reading from the N-terminus, the 117-residue chain is Large ribosomal subunit protein bL20c (117 aa).

It belongs to the bacterial ribosomal protein bL20 family.

The protein localises to the plastid. The protein resides in the chloroplast. Binds directly to 23S ribosomal RNA and is necessary for the in vitro assembly process of the 50S ribosomal subunit. It is not involved in the protein synthesizing functions of that subunit. In Draba nemorosa (Woodland whitlowgrass), this protein is Large ribosomal subunit protein bL20c.